Consider the following 427-residue polypeptide: Dihydroorotase (427 aa).

Zn(2+) is bound by residues H60 and H62. Substrate is bound by residues 62-64 (HLR) and N94. 3 residues coordinate Zn(2+): D152, H179, and H232. N278 contributes to the substrate binding site. D305 serves as a coordination point for Zn(2+). The active site involves D305. Residues H309 and 323 to 324 (FG) each bind substrate.

The protein belongs to the metallo-dependent hydrolases superfamily. DHOase family. Class I DHOase subfamily. It depends on Zn(2+) as a cofactor.

It carries out the reaction (S)-dihydroorotate + H2O = N-carbamoyl-L-aspartate + H(+). Its pathway is pyrimidine metabolism; UMP biosynthesis via de novo pathway; (S)-dihydroorotate from bicarbonate: step 3/3. Functionally, catalyzes the reversible cyclization of carbamoyl aspartate to dihydroorotate. This Geobacillus sp. (strain WCH70) protein is Dihydroorotase.